Here is a 389-residue protein sequence, read N- to C-terminus: Glutamate 5-kinase (389 aa).

Lys16 is an ATP binding site. Residues Ser56, Asp143, and Asn155 each contribute to the substrate site. ATP is bound at residue 175–176 (SD). The 78-residue stretch at 281-358 (AGELHVDDGA…AEIETILGYP (78 aa)) folds into the PUA domain.

The protein belongs to the glutamate 5-kinase family.

Its subcellular location is the cytoplasm. It carries out the reaction L-glutamate + ATP = L-glutamyl 5-phosphate + ADP. The protein operates within amino-acid biosynthesis; L-proline biosynthesis; L-glutamate 5-semialdehyde from L-glutamate: step 1/2. Its function is as follows. Catalyzes the transfer of a phosphate group to glutamate to form L-glutamate 5-phosphate. This is Glutamate 5-kinase from Rhizobium johnstonii (strain DSM 114642 / LMG 32736 / 3841) (Rhizobium leguminosarum bv. viciae).